A 580-amino-acid polypeptide reads, in one-letter code: 2-hydroxyacyl-CoA lyase 1 (580 aa).

A thiamine diphosphate-binding site is contributed by Glu47. A thiamine pyrophosphate binding region spans residues 413–494; it reads TMDIGRLCIP…FIVLNNNGVY (82 aa). Asp463 and Asn490 together coordinate Mg(2+).

Belongs to the TPP enzyme family. As to quaternary structure, homotetramer. Requires Mg(2+) as cofactor. It depends on thiamine diphosphate as a cofactor.

The protein localises to the peroxisome. It catalyses the reaction a 2-hydroxy-3-methyl fatty acyl-CoA = a 2-methyl-branched fatty aldehyde + formyl-CoA. The enzyme catalyses an (R)-2-hydroxy-long-chain-fatty acyl-CoA = a long-chain fatty aldehyde + formyl-CoA. It carries out the reaction 2-hydroxy-3-methylhexadecanoyl-CoA = 2-methylpentadecanal + formyl-CoA. The catalysed reaction is 2-hydroxyoctadecanoyl-CoA = heptadecanal + formyl-CoA. Peroxisomal 2-OH acyl-CoA lyase involved in the cleavage (C1 removal) reaction in the fatty acid alpha-oxydation in a thiamine pyrophosphate (TPP)-dependent manner. Involved in the degradation of 3-methyl-branched fatty acids and the shortening of 2-hydroxy long-chain fatty acids. In Dictyostelium discoideum (Social amoeba), this protein is 2-hydroxyacyl-CoA lyase 1 (hacl1).